The primary structure comprises 424 residues: Probable ribonuclease FAU-1 (424 aa).

Belongs to the FAU-1 family.

Its function is as follows. Probable RNase involved in rRNA stability through maturation and/or degradation of precursor rRNAs. Binds to RNA in loop regions with AU-rich sequences. This is Probable ribonuclease FAU-1 from Saccharolobus islandicus (strain L.S.2.15 / Lassen #1) (Sulfolobus islandicus).